Here is a 90-residue protein sequence, read N- to C-terminus: Probable Fe(2+)-trafficking protein (90 aa).

The protein belongs to the Fe(2+)-trafficking protein family.

In terms of biological role, could be a mediator in iron transactions between iron acquisition and iron-requiring processes, such as synthesis and/or repair of Fe-S clusters in biosynthetic enzymes. The sequence is that of Probable Fe(2+)-trafficking protein from Acidovorax ebreus (strain TPSY) (Diaphorobacter sp. (strain TPSY)).